Here is a 620-residue protein sequence, read N- to C-terminus: Chaperone protein DnaK (620 aa).

Thr174 bears the Phosphothreonine; by autocatalysis mark. Residues 590–620 form a disordered region; it reads AAGAGPDMSGAGPQGDTYAGDDVVDGDYREV.

It belongs to the heat shock protein 70 family.

Acts as a chaperone. The polypeptide is Chaperone protein DnaK (Lachnoclostridium phytofermentans (strain ATCC 700394 / DSM 18823 / ISDg) (Clostridium phytofermentans)).